The sequence spans 316 residues: Probable cell division protein WhiA (316 aa).

Positions 275–309 form a DNA-binding region, H-T-H motif; the sequence is TLKELGEMVSGGKISKSGINHRLRKIDEIAEKLRA.

The protein belongs to the WhiA family.

In terms of biological role, involved in cell division and chromosome segregation. The polypeptide is Probable cell division protein WhiA (Bacillus cereus (strain G9842)).